A 157-amino-acid polypeptide reads, in one-letter code: Phosphopantetheine adenylyltransferase (157 aa).

Thr-10 contributes to the substrate binding site. ATP is bound by residues 10 to 11 (TF) and His-18. The substrate site is built by Lys-42, Leu-74, and Arg-88. ATP contacts are provided by residues 89 to 91 (GLR), Glu-99, and 124 to 130 (NAFISSS).

Belongs to the bacterial CoaD family. Homohexamer. The cofactor is Mg(2+).

Its subcellular location is the cytoplasm. It catalyses the reaction (R)-4'-phosphopantetheine + ATP + H(+) = 3'-dephospho-CoA + diphosphate. The protein operates within cofactor biosynthesis; coenzyme A biosynthesis; CoA from (R)-pantothenate: step 4/5. Functionally, reversibly transfers an adenylyl group from ATP to 4'-phosphopantetheine, yielding dephospho-CoA (dPCoA) and pyrophosphate. This chain is Phosphopantetheine adenylyltransferase, found in Helicobacter pylori (strain Shi470).